The sequence spans 577 residues: Proton channel OTOP3 (577 aa).

Residues 1–46 (MASQTSAPAEPAPMPSPEAKTTEGASSYDQADMETKHAGSPCPPKQ) form a disordered region. Over 1–69 (MASQTSAPAE…RDRQAQKAGQ (69 aa)) the chain is Cytoplasmic. The chain crosses the membrane as a helical span at residues 70–90 (LFSGLLALNVVFLGGAFICSM). At 91–100 (IFNKVSVTLG) the chain is on the extracellular side. The helical transmembrane segment at 101–124 (DVWILLAALKVLSLLWLLYYTVGT) threads the bilayer. Over 125–140 (TRKPHAVLYRDPHAGP) the chain is Cytoplasmic. Residues 141–162 (IWVRGSLVLFGSCTVCLNIFRM) form a helical membrane-spanning segment. Residues 163-174 (GYDVSHIHCKSE) lie on the Extracellular side of the membrane. The helical transmembrane segment at 175-198 (VELIFPAIEIVFMIIQTWVLWRHC) threads the bilayer. Topologically, residues 199–206 (KDCVQVQT) are cytoplasmic. The helical transmembrane segment at 207–229 (NFTRCGLMLTLATNLLMWVLAVT) threads the bilayer. Over 230–276 (NDSMHREIEAELDALMEKFSGNGTNTCMCLNTTVCEVFRKGYLMLYP) the chain is Extracellular. A helical membrane pass occupies residues 277–293 (FSTEYCLICCAVLFVMW). Residues 294–319 (KNVSRSLAAHTGAHPNRSPFRLHGTI) are Cytoplasmic-facing. Residues 320–339 (FGPLLGLLALVAGVCVFVLF) form a helical membrane-spanning segment. Topologically, residues 340 to 353 (QIEASGPDIARQYF) are extracellular. Residues 354-376 (TLYYAFYVAVLPTMSLACLAGTA) form a helical membrane-spanning segment. Over 377–394 (IHGLEERELDTLKNPTRS) the chain is Cytoplasmic. The helical transmembrane segment at 395–416 (LDVVLLMGAALGQMGIAYFSIV) threads the bilayer. Topologically, residues 417–427 (AIVATQPHELL) are extracellular. The helical transmembrane segment at 428–450 (NQLILAYSLLLILQHITQNLFII) threads the bilayer. Topologically, residues 451–510 (EGLHRRPLWEPAVSGVMEKQDVELPRRGSLRELGQDLRRASRAYIHSFSHLNWKRRMLKE) are cytoplasmic. A helical transmembrane segment spans residues 511–528 (ISLFLILCNITLWMMPAF). Over 529-547 (GIHPEFENGLEKDFYGYRT) the chain is Extracellular. Residues 548 to 570 (WFTIVNFGLPLGVFYRMHSVGGL) traverse the membrane as a helical segment. Residues 571–577 (VEVYLGA) lie on the Cytoplasmic side of the membrane.

It belongs to the otopetrin family. In terms of assembly, homodimer. Expressed in epidermis, small intestine, stomach and retina.

The protein resides in the cell membrane. It catalyses the reaction H(+)(in) = H(+)(out). Its activity is regulated as follows. Activated by extracellular acidification. Activated by Zn(2+) under non-acidic conditions. Its function is as follows. Proton-selective channel gated by extracellular protons. In Mus musculus (Mouse), this protein is Proton channel OTOP3.